The chain runs to 405 residues: Imidazolonepropionase (405 aa).

Residues His72 and His74 each coordinate Fe(3+). Zn(2+) is bound by residues His72 and His74. Arg81, Tyr144, and His177 together coordinate 4-imidazolone-5-propanoate. Residue Tyr144 participates in N-formimidoyl-L-glutamate binding. His242 contacts Fe(3+). Residue His242 participates in Zn(2+) binding. Position 245 (Gln245) interacts with 4-imidazolone-5-propanoate. Asp317 serves as a coordination point for Fe(3+). Asp317 provides a ligand contact to Zn(2+). N-formimidoyl-L-glutamate is bound by residues Asn319 and Gly321. Thr322 contacts 4-imidazolone-5-propanoate.

This sequence belongs to the metallo-dependent hydrolases superfamily. HutI family. Zn(2+) serves as cofactor. The cofactor is Fe(3+).

Its subcellular location is the cytoplasm. It carries out the reaction 4-imidazolone-5-propanoate + H2O = N-formimidoyl-L-glutamate. The protein operates within amino-acid degradation; L-histidine degradation into L-glutamate; N-formimidoyl-L-glutamate from L-histidine: step 3/3. Functionally, catalyzes the hydrolytic cleavage of the carbon-nitrogen bond in imidazolone-5-propanoate to yield N-formimidoyl-L-glutamate. It is the third step in the universal histidine degradation pathway. The chain is Imidazolonepropionase from Erwinia tasmaniensis (strain DSM 17950 / CFBP 7177 / CIP 109463 / NCPPB 4357 / Et1/99).